We begin with the raw amino-acid sequence, 1134 residues long: MYQMNAKMHFTFVFALLVVSFNLDVLGKNLKYRIYEEQRVGSVIARLSEDVADVLVKLPNPSTVRFRAMQRGNTPLLVVNEDNGEISIGAKIDREQLCQKNLNCSIEFDVITLPTEHLQLFHIEVEVLDINDNSPQFSRSLIPIEISESAAVGTRIPLDSAFDPDVGENSLHTYSLSANDFFNIEVRTRTDGAKYAELIVVRELDRELKSSYELQLTASDMGVPQRSGSSILKISISDSNDNSPAFEQQSYIIQLLENSPVGTLLLDLNATDPDEGANGKIVYSFSSHVSPKIIETFKIDSERGHLTLFKQVDYEITKSYEIDVQAQDLGPNSIPAHCKIIIKVVDVNDNKPEISINLMSPGKEEISYIFEGDPIDTFVALVRVQDKDSGLNGEIVCKLHGHGHFKLQKTYENNYLILTNATLDREKRSEYSLTVIAEDKGTPSLSTVKHFTVQINDINDNPPHFQRSRYEFAISENNSPGAYITTVTATDPDLGENGQVTYTILESFILGSSITTYDTIDPSNGAIYALRIFDHEEVSQITFVVEARDGGSPKQLVSNTTVVLTIIDENDNVPVVIGPALRNNTAEISIPKGAESGFHVTRIRAIDRDSGVNAELSCSIVAGNEENIFVIDPRSCDIHTNVSMESVPYTEWELSVVIQDKGNPQLHTKVLLKCVIFEYAESVTSTAMTSVSQAPLDVSMIIIISLGAICAVLLVIMVLFATRCNREKKDTRSYNCRVAESTYQHHPKRPSRQIHKGDITLVPTVNGTLPIRSHHRSSPSSSPTLERGQMGSRQSHNSHQSLNSLVTISSNHVPENFSLELTHATPAVEVSQLLSMLHQGQYQPRPSFRGNKYSRSYRYALQDMDKFSLKDSGRGDSEAGDSDYDLGRDSPIDRLLGEGFSDLFLTDGRIPAAMRLCTEECRVLGHSDQCWMPPLPSPSSDYRSNMFIPGEEFPAQPQQQHPHQSLEDDVQPVDSGEKKKSFSTFGKDSPSEEDSGDTSTSSLLSEMSSVFQRLLPASLDTYSECTEMDRSNSLERRKGPLPAKTVGYPQGVAAWAASTHFQNPTNNSGPPLGTHSSVQPSSKWLPAMEEIPENYEEDDFDNVLNHLNDGKHELMDASELVAEINKLLQDVRQS.

A signal peptide spans M1–G27. Cadherin domains follow at residues K28–F137, S138–F246, E247–I354, P361–F465, Q466–V576, and R582–D697. The Extracellular segment spans residues K28–S699. Residue N103 is glycosylated (N-linked (GlcNAc...) asparagine). N269 is a glycosylation site (N-linked (GlcNAc...) asparagine). A glycan (N-linked (GlcNAc...) asparagine) is linked at N559. Residues M700–F720 traverse the membrane as a helical segment. Residues A721 to S1134 lie on the Cytoplasmic side of the membrane. 3 disordered regions span residues T768 to Q800, S868 to R888, and D941 to L1003. The span at G791 to Q800 shows a compositional bias: polar residues. The segment covering S868 to S877 has biased composition (basic and acidic residues). Residues I892–S1134 form an interaction with DAB1 region.

As to quaternary structure, interacts with DAB1.

Its subcellular location is the cell membrane. Its function is as follows. Potential calcium-dependent cell-adhesion protein. The sequence is that of Protocadherin-18 (PCDH18) from Bos taurus (Bovine).